Reading from the N-terminus, the 303-residue chain is Phosphatidylglycerol--prolipoprotein diacylglyceryl transferase (303 aa).

4 consecutive transmembrane segments (helical) span residues 18–38 (LGPF…LVGL), 58–78 (LLPI…VAFE), 106–126 (IWGG…SIIF), and 133–153 (EHFW…QAIG). Arginine 154 is an a 1,2-diacyl-sn-glycero-3-phospho-(1'-sn-glycerol) binding site. 3 consecutive transmembrane segments (helical) span residues 193–213 (PTFL…IFLF), 223–243 (LPPG…RFWI), and 266–286 (IAQL…WRIY).

Belongs to the Lgt family.

The protein resides in the cell inner membrane. The enzyme catalyses L-cysteinyl-[prolipoprotein] + a 1,2-diacyl-sn-glycero-3-phospho-(1'-sn-glycerol) = an S-1,2-diacyl-sn-glyceryl-L-cysteinyl-[prolipoprotein] + sn-glycerol 1-phosphate + H(+). The protein operates within protein modification; lipoprotein biosynthesis (diacylglyceryl transfer). Catalyzes the transfer of the diacylglyceryl group from phosphatidylglycerol to the sulfhydryl group of the N-terminal cysteine of a prolipoprotein, the first step in the formation of mature lipoproteins. The polypeptide is Phosphatidylglycerol--prolipoprotein diacylglyceryl transferase (Prochlorococcus marinus (strain NATL2A)).